Consider the following 868-residue polypeptide: Probable inorganic carbon transporter subunit DabA (868 aa).

Residues Cys-392, Asp-394, His-574, and Cys-589 each contribute to the Zn(2+) site.

It belongs to the inorganic carbon transporter (TC 9.A.2) DabA family. Forms a complex with DabB. The cofactor is Zn(2+).

The protein localises to the cell membrane. Its function is as follows. Part of an energy-coupled inorganic carbon pump. The protein is Probable inorganic carbon transporter subunit DabA of Bacillus cereus (strain B4264).